A 320-amino-acid chain; its full sequence is Cytochrome f (320 aa).

The N-terminal stretch at 1-35 is a signal peptide; the sequence is MQTRNAFSWLKKQITRSISVSLMIYILTRTSISSA. Heme contacts are provided by Tyr-36, Cys-56, Cys-59, and His-60. A helical membrane pass occupies residues 286–305; sequence VQGLLFFLASVILAQIFLVL.

Belongs to the cytochrome f family. As to quaternary structure, the 4 large subunits of the cytochrome b6-f complex are cytochrome b6, subunit IV (17 kDa polypeptide, petD), cytochrome f and the Rieske protein, while the 4 small subunits are PetG, PetL, PetM and PetN. The complex functions as a dimer. Requires heme as cofactor.

Its subcellular location is the plastid. The protein resides in the chloroplast thylakoid membrane. Its function is as follows. Component of the cytochrome b6-f complex, which mediates electron transfer between photosystem II (PSII) and photosystem I (PSI), cyclic electron flow around PSI, and state transitions. The polypeptide is Cytochrome f (Atropa belladonna (Belladonna)).